The chain runs to 263 residues: Glutamate racemase (263 aa).

Substrate contacts are provided by residues 10–11 and 42–43; these read DS and YG. C73 serves as the catalytic Proton donor/acceptor. 74-75 is a substrate binding site; it reads NS. Catalysis depends on C183, which acts as the Proton donor/acceptor. Residue 184-185 participates in substrate binding; the sequence is TH.

Belongs to the aspartate/glutamate racemases family.

It catalyses the reaction L-glutamate = D-glutamate. The protein operates within cell wall biogenesis; peptidoglycan biosynthesis. Provides the (R)-glutamate required for cell wall biosynthesis. The protein is Glutamate racemase of Acidothermus cellulolyticus (strain ATCC 43068 / DSM 8971 / 11B).